Reading from the N-terminus, the 340-residue chain is 3-isopropylmalate dehydrogenase (340 aa).

Residues Arg-88, Arg-98, Arg-122, and Asp-212 each contribute to the substrate site. Residues Asp-212, Asp-236, and Asp-240 each contribute to the Mg(2+) site. 272–284 (GSAPDIMGKGIAD) provides a ligand contact to NAD(+).

Belongs to the isocitrate and isopropylmalate dehydrogenases family. LeuB type 2 subfamily. As to quaternary structure, homodimer. Mg(2+) is required as a cofactor. Requires Mn(2+) as cofactor.

Its subcellular location is the cytoplasm. It catalyses the reaction (2R,3S)-3-isopropylmalate + NAD(+) = 4-methyl-2-oxopentanoate + CO2 + NADH. The protein operates within amino-acid biosynthesis; L-leucine biosynthesis; L-leucine from 3-methyl-2-oxobutanoate: step 3/4. In terms of biological role, catalyzes the oxidation of 3-carboxy-2-hydroxy-4-methylpentanoate (3-isopropylmalate) to 3-carboxy-4-methyl-2-oxopentanoate. The product decarboxylates to 4-methyl-2 oxopentanoate. In Corynebacterium efficiens (strain DSM 44549 / YS-314 / AJ 12310 / JCM 11189 / NBRC 100395), this protein is 3-isopropylmalate dehydrogenase.